The primary structure comprises 171 residues: Regulator of ribonuclease activity A (171 aa).

The protein belongs to the RraA family. As to quaternary structure, homotrimer. Binds to both RNA-binding sites in the C-terminal region of Rne and to RhlB.

The protein localises to the cytoplasm. Functionally, globally modulates RNA abundance by binding to RNase E (Rne) and regulating its endonucleolytic activity. Can modulate Rne action in a substrate-dependent manner by altering the composition of the degradosome. Modulates RNA-binding and helicase activities of the degradosome. In Vibrio cholerae serotype O1 (strain ATCC 39315 / El Tor Inaba N16961), this protein is Regulator of ribonuclease activity A.